The following is a 1045-amino-acid chain: Extracellular serine protease (1045 aa).

Positions methionine 1 to alanine 27 are cleaved as a signal peptide. The Peptidase S8 domain maps to glutamine 49 to isoleucine 397. Residues aspartate 76, histidine 112, and serine 341 each act as charge relay system in the active site. Residues serine 646–phenylalanine 1045 constitute a propeptide, translocator domain; removed in mature form. Residues isoleucine 769–phenylalanine 1045 form the Autotransporter domain.

It belongs to the peptidase S8 family.

Its subcellular location is the secreted. This Serratia marcescens protein is Extracellular serine protease.